Consider the following 151-residue polypeptide: Putative truncated GMC-type inactive oxidoreductase L893 (151 aa).

The protein belongs to the GMC oxidoreductase family.

Its subcellular location is the virion. The protein is Putative truncated GMC-type inactive oxidoreductase L893 of Acanthamoeba polyphaga (Amoeba).